Consider the following 809-residue polypeptide: Phenylalanine--tRNA ligase beta subunit (809 aa).

One can recognise a tRNA-binding domain in the interval 39-153 (APPFSQIVVG…EDTPVGADIR (115 aa)). The B5 domain maps to 404–479 (PKREPVRMRV…RIYGFEQIPA (76 aa)). Mg(2+) contacts are provided by aspartate 457, aspartate 463, glutamate 466, and glutamate 467. The FDX-ACB domain maps to 706-808 (PRVPAVTRDI…AGDAFGARLR (103 aa)).

This sequence belongs to the phenylalanyl-tRNA synthetase beta subunit family. Type 1 subfamily. In terms of assembly, tetramer of two alpha and two beta subunits. It depends on Mg(2+) as a cofactor.

It is found in the cytoplasm. The catalysed reaction is tRNA(Phe) + L-phenylalanine + ATP = L-phenylalanyl-tRNA(Phe) + AMP + diphosphate + H(+). The sequence is that of Phenylalanine--tRNA ligase beta subunit from Ralstonia nicotianae (strain ATCC BAA-1114 / GMI1000) (Ralstonia solanacearum).